The sequence spans 117 residues: MARVKRGVQVRQRHKKVIKQAKGFHGRSKNCYRIALRRLEKSWQYAYRDRKVRKRDFRSLWIQRINAAVRSFGLVYSVFMKGLKAAGVDVNRKVLSELAISQPSAFGEIVNKAKAAL.

The protein belongs to the bacterial ribosomal protein bL20 family.

Its function is as follows. Binds directly to 23S ribosomal RNA and is necessary for the in vitro assembly process of the 50S ribosomal subunit. It is not involved in the protein synthesizing functions of that subunit. This chain is Large ribosomal subunit protein bL20, found in Neorickettsia sennetsu (strain ATCC VR-367 / Miyayama) (Ehrlichia sennetsu).